We begin with the raw amino-acid sequence, 287 residues long: Transcription initiation factor IIB 1 (287 aa).

Residues 3–31 form a TFIIB-type zinc finger; it reads HPHRCPECDGTIRETDTEHVCADCGLVVT. Zn(2+) is bound by residues Cys-7, Cys-10, Cys-23, and Cys-26. A compositionally biased stretch (basic and acidic residues) spans 40-53; that stretch reads EWRTFSDDPDHAPE. The interval 40–63 is disordered; it reads EWRTFSDDPDHAPERTGAPLTRSR. 2 repeat units span residues 111–194 and 205–286.

Belongs to the TFIIB family.

Stabilizes TBP binding to an archaeal box-A promoter. Also responsible for recruiting RNA polymerase II to the pre-initiation complex (DNA-TBP-TFIIB). In Halobacterium salinarum (strain ATCC 700922 / JCM 11081 / NRC-1) (Halobacterium halobium), this protein is Transcription initiation factor IIB 1.